Here is an 83-residue protein sequence, read N- to C-terminus: Ferredoxin (83 aa).

4Fe-4S ferredoxin-type domains follow at residues 2 to 29 (ALMI…QGDE) and 31 to 64 (YVIE…KDPS). [4Fe-4S] cluster is bound by residues cysteine 9, cysteine 12, cysteine 15, cysteine 19, cysteine 38, cysteine 41, cysteine 50, and cysteine 54.

[4Fe-4S] cluster is required as a cofactor.

In terms of biological role, ferredoxins are iron-sulfur proteins that transfer electrons in a wide variety of metabolic reactions. This chain is Ferredoxin (fdx), found in Allochromatium vinosum (strain ATCC 17899 / DSM 180 / NBRC 103801 / NCIMB 10441 / D) (Chromatium vinosum).